The sequence spans 233 residues: Small ribosomal subunit protein uS2 (233 aa).

The protein belongs to the universal ribosomal protein uS2 family.

This Clostridium botulinum (strain Hall / ATCC 3502 / NCTC 13319 / Type A) protein is Small ribosomal subunit protein uS2.